Here is a 304-residue protein sequence, read N- to C-terminus: Flagellin (304 aa).

The protein belongs to the bacterial flagellin family. Interacts with FliW in a 1:1 complex. Forms a 3-way complex of Hag, FliS and FliW, in which Flis and FliW do not directly interact.

The protein localises to the secreted. The protein resides in the bacterial flagellum. It is found in the cell wall. Its function is as follows. Flagellin is the subunit which polymerizes to form the filaments of bacterial flagella. Assembly into flagella requires FliW. Acts as a homeostatic autoinhibitory regulator to control its own cytoplasmic levels. Partner switching by flagellin between FliW and CsrA provides a flagellar assembly checkpoint to tightly control the timing of flagellin synthesis. Flagellin binds to assembly factor FliW, freeing translation regulator CsrA to repress translation of the flagellin mRNA. When the flagellar hook is assembled flagellin is secreted, depleting intracellular flagellin, which frees FliW to interact with CsrA. This derepresses flagellin translation and provides protein for flagellar assembly. Once the flagellar filament is completed cytoplasmic flagellin levels rise and CsrA translation repression of flagellin reinitiates. The chain is Flagellin from Bacillus subtilis (strain 168).